Here is an 834-residue protein sequence, read N- to C-terminus: Copper-exporting P-type ATPase (834 aa).

HMA domains are found at residues 3–64 (QTID…YDAS) and 99–162 (DSQQ…YGAE). 4 residues coordinate Cu(+): cysteine 14, cysteine 17, cysteine 110, and cysteine 113. 6 helical membrane passes run 187–207 (WQAI…MIGD), 218–238 (LWLV…GHFY), 254–274 (TLVA…NLWP), 284–304 (LYYE…MLEA), 438–458 (AVFV…WYFF), and 464–484 (IVYT…CALG). Residue aspartate 523 is the 4-aspartylphosphate intermediate of the active site. Mg(2+)-binding residues include aspartate 720 and aspartate 724. 2 helical membrane-spanning segments follow: residues 779–799 (LGAF…LWPF) and 801–821 (GTLL…ITVV).

It belongs to the cation transport ATPase (P-type) (TC 3.A.3) family. Type IB subfamily.

It is found in the cell inner membrane. Its subcellular location is the cytoplasm. It catalyses the reaction Cu(+)(in) + ATP + H2O = Cu(+)(out) + ADP + phosphate + H(+). In terms of biological role, involved in Cu(+) export. Its function is as follows. Probably also encodes a cytoplasmic copper chaperone CopA(Z) that is produced by programmed ribosomal frameshifting. The chain is Copper-exporting P-type ATPase (copA) from Escherichia coli O157:H7.